The primary structure comprises 500 residues: ERAD-associated E3 ubiquitin-protein ligase HRD1 (500 aa).

Residues 1-3 (MIR) lie on the Cytoplasmic side of the membrane. Residues 4-24 (LQTYAAFSLMATATAVYYAFS) traverse the membrane as a helical segment. Residues 25 to 40 (SREQFYPAMVYLSTSK) lie on the Lumenal side of the membrane. Residues 41-61 (ICFVLLLNTGLVAMCVAWQLV) form a helical membrane-spanning segment. Residues 62–98 (KRLFLGTLREAEVERLNEQAWREVVEILFAVTIFRQD) lie on the Cytoplasmic side of the membrane. The helical transmembrane segment at 99–119 (FSVSFLAMVAALLLVKALHWL) threads the bilayer. Topologically, residues 120–135 (AQKRVEYIETTPSVPM) are lumenal. The helical transmembrane segment at 136–156 (LSHARIVSFMLFLLVVDCLFL) threads the bilayer. Topologically, residues 157 to 170 (SNSLRSLIHKREAS) are cytoplasmic. Residues 171-191 (VAIFFSFEYMILATSTVSTFV) form a helical membrane-spanning segment. Residues 192–225 (KYIFYVSDMLMEGQWEKKAVYTFYLELISDLVHL) are Lumenal-facing. The helical transmembrane segment at 226–246 (SLYMLFFIAIFLNYGVPLHLI) threads the bilayer. The Cytoplasmic portion of the chain corresponds to 247-500 (RELYETFRNF…NENGEHTKSD (254 aa)). The RING-type; atypical zinc finger occupies 292–330 (CIICREEMTTAKKLLCGHLFHVHCLRSWLERQHTCPTCR). Disordered regions lie at residues 337 to 375 (DNGR…SRRQ) and 398 to 438 (NNLN…SAPT). The segment covering 348–358 (VHPGVQPVPGN) has biased composition (low complexity). A compositionally biased stretch (polar residues) spans 398–426 (NNLNRYSTPPQSTSNGPQSGEASTSNQSP).

It belongs to the HRD1 family.

Its subcellular location is the endoplasmic reticulum membrane. The catalysed reaction is S-ubiquitinyl-[E2 ubiquitin-conjugating enzyme]-L-cysteine + [acceptor protein]-L-lysine = [E2 ubiquitin-conjugating enzyme]-L-cysteine + N(6)-ubiquitinyl-[acceptor protein]-L-lysine.. Its pathway is protein modification; protein ubiquitination. Functionally, probable component of the HRD1 ubiquitin ligase complex that mediates the rapid degradation of misfolded endoplasmic reticulum (ER) proteins, a process called ER-associated degradation (ERAD). In Oryza sativa subsp. japonica (Rice), this protein is ERAD-associated E3 ubiquitin-protein ligase HRD1.